The sequence spans 387 residues: Arrestin-C (387 aa).

The protein belongs to the arrestin family. Retina and pineal gland.

May play a role in an as yet undefined retina-specific signal transduction. Could bind to photoactivated-phosphorylated red/green opsins. This chain is Arrestin-C (arr3), found in Xenopus laevis (African clawed frog).